Here is a 270-residue protein sequence, read N- to C-terminus: NADPH-dependent 7-cyano-7-deazaguanine reductase (270 aa).

Position 79–81 (79–81 (IES)) interacts with substrate. 81 to 82 (SK) provides a ligand contact to NADPH. The active-site Thioimide intermediate is C177. The Proton donor role is filled by D184. Substrate is bound at residue 216–217 (HE). NADPH is bound at residue 245–246 (RG).

This sequence belongs to the GTP cyclohydrolase I family. QueF type 2 subfamily. Homodimer.

The protein localises to the cytoplasm. The catalysed reaction is 7-aminomethyl-7-carbaguanine + 2 NADP(+) = 7-cyano-7-deazaguanine + 2 NADPH + 3 H(+). It functions in the pathway tRNA modification; tRNA-queuosine biosynthesis. Its function is as follows. Catalyzes the NADPH-dependent reduction of 7-cyano-7-deazaguanine (preQ0) to 7-aminomethyl-7-deazaguanine (preQ1). The protein is NADPH-dependent 7-cyano-7-deazaguanine reductase of Acinetobacter baumannii (strain ACICU).